A 253-amino-acid chain; its full sequence is 5'-nucleotidase SurE (253 aa).

A divalent metal cation is bound by residues Asp-8, Asp-9, Ser-39, and Asn-95.

Belongs to the SurE nucleotidase family. It depends on a divalent metal cation as a cofactor.

Its subcellular location is the cytoplasm. The enzyme catalyses a ribonucleoside 5'-phosphate + H2O = a ribonucleoside + phosphate. Functionally, nucleotidase that shows phosphatase activity on nucleoside 5'-monophosphates. This Chloroflexus aggregans (strain MD-66 / DSM 9485) protein is 5'-nucleotidase SurE.